The sequence spans 111 residues: MIWLTLVFASLLSVAGQLCQKQATCFAAVNKRRKHIVLWLGLALACLGLAMVLWLLVLQNVPVGIAYPMLSLNFVWVTLAAVKLWHEPVSLRHWCGLAFIIGGIVILGSTV.

The Cytoplasmic segment spans residues 1–35; it reads MIWLTLVFASLLSVAGQLCQKQATCFAAVNKRRKH. The helical transmembrane segment at 36–56 threads the bilayer; that stretch reads IVLWLGLALACLGLAMVLWLL. The EamA domain occupies 40–109; it reads LGLALACLGL…IIGGIVILGS (70 aa). The Periplasmic segment spans residues 57 to 60; the sequence is VLQN. A helical membrane pass occupies residues 61–81; it reads VPVGIAYPMLSLNFVWVTLAA. Residues 82–87 lie on the Cytoplasmic side of the membrane; that stretch reads VKLWHE. A helical membrane pass occupies residues 88-108; sequence PVSLRHWCGLAFIIGGIVILG. Residues 109-111 are Periplasmic-facing; it reads STV.

The protein belongs to the ArnE family. Heterodimer of ArnE and ArnF.

The protein resides in the cell inner membrane. Its pathway is bacterial outer membrane biogenesis; lipopolysaccharide biosynthesis. Functionally, translocates 4-amino-4-deoxy-L-arabinose-phosphoundecaprenol (alpha-L-Ara4N-phosphoundecaprenol) from the cytoplasmic to the periplasmic side of the inner membrane. This chain is Probable 4-amino-4-deoxy-L-arabinose-phosphoundecaprenol flippase subunit ArnE, found in Escherichia coli O81 (strain ED1a).